The sequence spans 386 residues: Succinate--CoA ligase [ADP-forming] subunit beta (386 aa).

The region spanning 9–244 (KEILRKYGVP…HDEEDPLETR (236 aa)) is the ATP-grasp domain. Residues K46, 53–55 (GRG), E99, C102, and E107 contribute to the ATP site. Positions 199 and 213 each coordinate Mg(2+). Substrate-binding positions include N264 and 321–323 (GIM).

Belongs to the succinate/malate CoA ligase beta subunit family. As to quaternary structure, heterotetramer of two alpha and two beta subunits. The cofactor is Mg(2+).

It carries out the reaction succinate + ATP + CoA = succinyl-CoA + ADP + phosphate. It catalyses the reaction GTP + succinate + CoA = succinyl-CoA + GDP + phosphate. It participates in carbohydrate metabolism; tricarboxylic acid cycle; succinate from succinyl-CoA (ligase route): step 1/1. Functionally, succinyl-CoA synthetase functions in the citric acid cycle (TCA), coupling the hydrolysis of succinyl-CoA to the synthesis of either ATP or GTP and thus represents the only step of substrate-level phosphorylation in the TCA. The beta subunit provides nucleotide specificity of the enzyme and binds the substrate succinate, while the binding sites for coenzyme A and phosphate are found in the alpha subunit. The chain is Succinate--CoA ligase [ADP-forming] subunit beta from Rickettsia peacockii (strain Rustic).